We begin with the raw amino-acid sequence, 307 residues long: Aspartate carbamoyltransferase catalytic subunit (307 aa).

Residues Arg-56 and Thr-57 each contribute to the carbamoyl phosphate site. Lys-84 lines the L-aspartate pocket. The carbamoyl phosphate site is built by Arg-106, His-136, and Gln-139. Residues Arg-169 and Arg-221 each contribute to the L-aspartate site. Carbamoyl phosphate-binding residues include Ala-262 and Pro-263.

The protein belongs to the aspartate/ornithine carbamoyltransferase superfamily. ATCase family. In terms of assembly, heterododecamer (2C3:3R2) of six catalytic PyrB chains organized as two trimers (C3), and six regulatory PyrI chains organized as three dimers (R2).

It carries out the reaction carbamoyl phosphate + L-aspartate = N-carbamoyl-L-aspartate + phosphate + H(+). Its pathway is pyrimidine metabolism; UMP biosynthesis via de novo pathway; (S)-dihydroorotate from bicarbonate: step 2/3. Its function is as follows. Catalyzes the condensation of carbamoyl phosphate and aspartate to form carbamoyl aspartate and inorganic phosphate, the committed step in the de novo pyrimidine nucleotide biosynthesis pathway. The protein is Aspartate carbamoyltransferase catalytic subunit of Streptococcus pneumoniae (strain 70585).